The primary structure comprises 508 residues: Maturase K (508 aa).

It belongs to the intron maturase 2 family. MatK subfamily.

The protein localises to the plastid. It is found in the chloroplast. Functionally, usually encoded in the trnK tRNA gene intron. Probably assists in splicing its own and other chloroplast group II introns. The protein is Maturase K of Abies bracteata (Bristle-cone fir).